Reading from the N-terminus, the 715-residue chain is Fatty acid oxidation complex subunit alpha (715 aa).

The enoyl-CoA hydratase stretch occupies residues 1–190 (MTTTSAFMLN…KAGLVDDVVP (190 aa)). The 3-hydroxyacyl-CoA dehydrogenase stretch occupies residues 306-715 (GPLNSVGILG…WTNGETDQGN (410 aa)).

The protein in the N-terminal section; belongs to the enoyl-CoA hydratase/isomerase family. This sequence in the central section; belongs to the 3-hydroxyacyl-CoA dehydrogenase family. Heterotetramer of two alpha chains (FadJ) and two beta chains (FadI).

It is found in the cytoplasm. It catalyses the reaction a (3S)-3-hydroxyacyl-CoA = a (2E)-enoyl-CoA + H2O. The catalysed reaction is a 4-saturated-(3S)-3-hydroxyacyl-CoA = a (3E)-enoyl-CoA + H2O. It carries out the reaction a (3S)-3-hydroxyacyl-CoA + NAD(+) = a 3-oxoacyl-CoA + NADH + H(+). The enzyme catalyses (3S)-3-hydroxybutanoyl-CoA = (3R)-3-hydroxybutanoyl-CoA. It participates in lipid metabolism; fatty acid beta-oxidation. In terms of biological role, catalyzes the formation of a hydroxyacyl-CoA by addition of water on enoyl-CoA. Also exhibits 3-hydroxyacyl-CoA epimerase and 3-hydroxyacyl-CoA dehydrogenase activities. This is Fatty acid oxidation complex subunit alpha from Salmonella agona (strain SL483).